Reading from the N-terminus, the 573-residue chain is Proline--tRNA ligase (573 aa).

Belongs to the class-II aminoacyl-tRNA synthetase family. ProS type 1 subfamily. In terms of assembly, homodimer.

The protein resides in the cytoplasm. The catalysed reaction is tRNA(Pro) + L-proline + ATP = L-prolyl-tRNA(Pro) + AMP + diphosphate. Catalyzes the attachment of proline to tRNA(Pro) in a two-step reaction: proline is first activated by ATP to form Pro-AMP and then transferred to the acceptor end of tRNA(Pro). As ProRS can inadvertently accommodate and process non-cognate amino acids such as alanine and cysteine, to avoid such errors it has two additional distinct editing activities against alanine. One activity is designated as 'pretransfer' editing and involves the tRNA(Pro)-independent hydrolysis of activated Ala-AMP. The other activity is designated 'posttransfer' editing and involves deacylation of mischarged Ala-tRNA(Pro). The misacylated Cys-tRNA(Pro) is not edited by ProRS. The protein is Proline--tRNA ligase of Methylobacillus flagellatus (strain ATCC 51484 / DSM 6875 / VKM B-1610 / KT).